An 899-amino-acid polypeptide reads, in one-letter code: Nuclear factor NF-kappa-B p100 subunit (899 aa).

Residues S23 and S161 each carry the phosphoserine modification. In terms of domain architecture, RHD spans 35–224 (ADGPYLVIVE…QPIHDSKSPG (190 aa)). The Nuclear localization signal motif lies at 337-341 (RKRRK). Residues 346 to 377 (FSQPFGGGSHMGGGSGGSAGGYGGAGGGGSLG) form a GRR region. Residues 403–434 (GGAQMAGSRRDTDAGEGAEEPRTPPEAPQGEP) are disordered. Basic and acidic residues predominate over residues 410-425 (SRRDTDAGEGAEEPRT). T425 is subject to Phosphothreonine. ANK repeat units lie at residues 487–516 (NGDT…HAQY), 526–555 (LHQT…DPTL), 559–590 (HGDS…HAVP), 599–628 (EGLY…EVEA), 633–663 (GGRT…NVNA), and 667–696 (AGNT…DIHA). The segment at 698–734 (NEEPLCPLPSPSTSGSDSDSEGPERDTQRNFRGHTPL) is disordered. S713, S715, and S717 each carry phosphoserine. The ANK 7 repeat unit spans residues 729 to 755 (RGHTPLDLTCSTKVKTLLLNAAQNTTE). Positions 764-851 (AGPGLSLGDA…EGVRLLKGPE (88 aa)) constitute a Death domain. Residue S812 is modified to Phosphoserine. Residues 851–865 (ETRDKLPSTEVKEDS) show a composition bias toward basic and acidic residues. Residues 851–899 (ETRDKLPSTEVKEDSAYGSQSVEQEAEKLCPPPEPPGGLCHGHPQPQVH) are disordered. Residue K855 forms a Glycyl lysine isopeptide (Lys-Gly) (interchain with G-Cter in ubiquitin) linkage. Phosphoserine; by MAP3K14 occurs at positions 865 and 869. The segment covering 887–899 (GGLCHGHPQPQVH) has biased composition (low complexity).

Component of the NF-kappa-B RelB-p52 complex. Homodimer; component of the NF-kappa-B p52-p52 complex. Component of the NF-kappa-B p65-p52 complex. Component of the NF-kappa-B p52-c-Rel complex. NFKB2/p52 interacts with NFKBIE. Component of a complex consisting of the NF-kappa-B p50-p50 homodimer and BCL3. Directly interacts with MEN1. Post-translationally, while translation occurs, the particular unfolded structure after the GRR repeat promotes the generation of p52 making it an acceptable substrate for the proteasome. This process is known as cotranslational processing. The processed form is active and the unprocessed form acts as an inhibitor (I kappa B-like), being able to form cytosolic complexes with NF-kappa B, trapping it in the cytoplasm. Complete folding of the region downstream of the GRR repeat precludes processing. In terms of processing, subsequent to MAP3K14-dependent serine phosphorylation, p100 polyubiquitination occurs then triggering its proteasome-dependent processing. Constitutive processing is tightly suppressed by its C-terminal processing inhibitory domain, named PID, which contains the death domain. Post-translationally, ubiquitinated by TRIM55; leading to processing by VCP and subsequent ubiquitin-dependent protein degradation by the proteasome. In terms of tissue distribution, highly expressed in lymph nodes and thymus.

Its subcellular location is the nucleus. The protein localises to the cytoplasm. In terms of biological role, NF-kappa-B is a pleiotropic transcription factor present in almost all cell types and is the endpoint of a series of signal transduction events that are initiated by a vast array of stimuli related to many biological processes such as inflammation, immunity, differentiation, cell growth, tumorigenesis and apoptosis. NF-kappa-B is a homo- or heterodimeric complex formed by the Rel-like domain-containing proteins RELA/p65, RELB, NFKB1/p105, NFKB1/p50, REL and NFKB2/p52. The dimers bind at kappa-B sites in the DNA of their target genes and the individual dimers have distinct preferences for different kappa-B sites that they can bind with distinguishable affinity and specificity. Different dimer combinations act as transcriptional activators or repressors, respectively. NF-kappa-B is controlled by various mechanisms of post-translational modification and subcellular compartmentalization as well as by interactions with other cofactors or corepressors. NF-kappa-B complexes are held in the cytoplasm in an inactive state complexed with members of the NF-kappa-B inhibitor (I-kappa-B) family. In a conventional activation pathway, I-kappa-B is phosphorylated by I-kappa-B kinases (IKKs) in response to different activators, subsequently degraded thus liberating the active NF-kappa-B complex which translocates to the nucleus. In a non-canonical activation pathway, the MAP3K14-activated CHUK/IKKA homodimer phosphorylates NFKB2/p100 associated with RelB, inducing its proteolytic processing to NFKB2/p52 and the formation of NF-kappa-B RelB-p52 complexes. The NF-kappa-B heterodimeric RelB-p52 complex is a transcriptional activator. The NF-kappa-B p52-p52 homodimer is a transcriptional repressor. NFKB2 appears to have dual functions such as cytoplasmic retention of attached NF-kappa-B proteins by p100 and generation of p52 by a cotranslational processing. The proteasome-mediated process ensures the production of both p52 and p100 and preserves their independent function. p52 binds to the kappa-B consensus sequence 5'-GGRNNYYCC-3', located in the enhancer region of genes involved in immune response and acute phase reactions. p52 and p100 are respectively the minor and major form; the processing of p100 being relatively poor. Isoform p49 is a subunit of the NF-kappa-B protein complex, which stimulates the HIV enhancer in synergy with p65. In concert with RELB, regulates the circadian clock by repressing the transcriptional activator activity of the CLOCK-BMAL1 heterodimer. The sequence is that of Nuclear factor NF-kappa-B p100 subunit (Nfkb2) from Mus musculus (Mouse).